Reading from the N-terminus, the 111-residue chain is Phosphoribosyl-ATP pyrophosphatase (111 aa).

It belongs to the PRA-PH family.

The protein localises to the cytoplasm. It carries out the reaction 1-(5-phospho-beta-D-ribosyl)-ATP + H2O = 1-(5-phospho-beta-D-ribosyl)-5'-AMP + diphosphate + H(+). It functions in the pathway amino-acid biosynthesis; L-histidine biosynthesis; L-histidine from 5-phospho-alpha-D-ribose 1-diphosphate: step 2/9. In Alcanivorax borkumensis (strain ATCC 700651 / DSM 11573 / NCIMB 13689 / SK2), this protein is Phosphoribosyl-ATP pyrophosphatase.